The sequence spans 247 residues: Small ribosomal subunit protein uS3 (247 aa).

Residues 39 to 107 (VRDYLRKKLD…PAQVNIEEIT (69 aa)) enclose the KH type-2 domain. A disordered region spans residues 213 to 247 (SVYNPPKEDKTRAPKRRGRSNSNRRNSDRANTDRG). Residues 237–247 (RNSDRANTDRG) show a composition bias toward basic and acidic residues.

The protein belongs to the universal ribosomal protein uS3 family. In terms of assembly, part of the 30S ribosomal subunit. Forms a tight complex with proteins S10 and S14.

In terms of biological role, binds the lower part of the 30S subunit head. Binds mRNA in the 70S ribosome, positioning it for translation. The sequence is that of Small ribosomal subunit protein uS3 from Psychrobacter sp. (strain PRwf-1).